We begin with the raw amino-acid sequence, 549 residues long: Speedy protein E3 (549 aa).

Residues 1 to 15 are compositionally biased toward low complexity; the sequence is MTSHQPQPQEEQSPQ. 5 disordered regions span residues 1–74, 126–145, 188–218, 261–291, and 334–364; these read MTSH…EPEE, KREC…APEP, and SPPR…APEP. Composition is skewed to acidic residues over residues 58–74, 131–145, 204–218, 277–291, and 350–364; these read DESD…EPEE and DESD…APEP.

It belongs to the Speedy/Ringo family. In terms of tissue distribution, predominantly expressed in testis and spleen.

The sequence is that of Speedy protein E3 from Homo sapiens (Human).